A 389-amino-acid polypeptide reads, in one-letter code: Alkanesulfonate monooxygenase (389 aa).

Belongs to the SsuD family.

The enzyme catalyses an alkanesulfonate + FMNH2 + O2 = an aldehyde + FMN + sulfite + H2O + 2 H(+). In terms of biological role, catalyzes the desulfonation of aliphatic sulfonates. This Rhizobium etli (strain CIAT 652) protein is Alkanesulfonate monooxygenase.